Here is a 214-residue protein sequence, read N- to C-terminus: UPF0725 protein At1g19565 (214 aa).

Residues 56–92 (EEEYEPSLPSSESPTDSCHADHESPDSPKYQQPAPGE) are disordered.

It belongs to the UPF0725 (EMB2204) family.

This is UPF0725 protein At1g19565 from Arabidopsis thaliana (Mouse-ear cress).